The sequence spans 781 residues: Putative amine oxidase [copper-containing] (781 aa).

The first 34 residues, 1 to 34, serve as a signal peptide directing secretion; sequence MSLPKTANGMDKLKLCYLLLFYLGSSSLTEVSGA. C199 and C203 are oxidised to a cystine. 385–395 serves as a coordination point for substrate; the sequence is FFDSSYMIGMN. The active-site Proton acceptor is D387. C405 and C432 form a disulfide bridge. Position 472–477 (472–477) interacts with substrate; the sequence is IANYDY. Y475 functions as the Schiff-base intermediate with substrate; via topaquinone in the catalytic mechanism. Y475 is modified (2',4',5'-topaquinone). 2 residues coordinate Cu cation: H525 and H527. Positions 534, 536, 579, 671, 674, 676, 682, and 683 each coordinate Ca(2+). Residues D534 and D536 each contribute to the Mn(2+) site. Residue D682 coordinates Mn(2+). Residue H693 coordinates Cu cation.

It belongs to the copper/topaquinone oxidase family. Homodimer. The cofactor is Cu cation. Ca(2+) is required as a cofactor. Requires L-topaquinone as cofactor. Mn(2+) serves as cofactor. Topaquinone (TPQ) is generated by copper-dependent autoxidation of a specific tyrosyl residue. In terms of tissue distribution, prismatic layer of shell (at protein level). Expressed primarily in the mantle with highest level in the mantle edge and lower level in the mantle pallium.

Its subcellular location is the secreted. This is Putative amine oxidase [copper-containing] from Margaritifera margaritifera (Freshwater pearl mussel).